Here is a 287-residue protein sequence, read N- to C-terminus: Polyamine aminopropyltransferase (287 aa).

A PABS domain is found at 5 to 238; it reads ETWHETLHDH…GIMTFAWASQ (234 aa). Gln33 contributes to the S-methyl-5'-thioadenosine binding site. Spermidine contacts are provided by His64 and Asp88. Residues Glu108 and 140 to 141 each bind S-methyl-5'-thioadenosine; that span reads DG. Asp158 serves as the catalytic Proton acceptor. 158–161 serves as a coordination point for spermidine; sequence DCTD. An S-methyl-5'-thioadenosine-binding site is contributed by Pro165.

This sequence belongs to the spermidine/spermine synthase family. As to quaternary structure, homodimer or homotetramer.

The protein resides in the cytoplasm. It catalyses the reaction S-adenosyl 3-(methylsulfanyl)propylamine + putrescine = S-methyl-5'-thioadenosine + spermidine + H(+). It participates in amine and polyamine biosynthesis; spermidine biosynthesis; spermidine from putrescine: step 1/1. Its function is as follows. Catalyzes the irreversible transfer of a propylamine group from the amino donor S-adenosylmethioninamine (decarboxy-AdoMet) to putrescine (1,4-diaminobutane) to yield spermidine. This chain is Polyamine aminopropyltransferase, found in Sodalis glossinidius (strain morsitans).